The following is a 593-amino-acid chain: Autophagy-related protein 22-2 (593 aa).

The chain crosses the membrane as a helical span at residues Tyr42 to Leu62. A glycan (N-linked (GlcNAc...) asparagine) is linked at Asn90. 3 helical membrane-spanning segments follow: residues Ser112–Phe132, Leu159–Val179, and Cys181–Pro201. Positions Ser228–Leu261 are disordered. 4 consecutive transmembrane segments (helical) span residues Gly271–Phe291, Leu305–Cys325, Val377–Thr397, and Leu415–Ala435. Residue Asn443 is glycosylated (N-linked (GlcNAc...) asparagine). The next 4 membrane-spanning stretches (helical) occupy residues Leu448 to Ile468, Trp480 to Cys500, Lys525 to Val545, and Gly548 to Ala568.

The protein belongs to the ATG22 family.

Its subcellular location is the vacuole membrane. Its function is as follows. Vacuolar effluxer which mediate the efflux of amino acids resulting from autophagic degradation. The release of autophagic amino acids allows the maintenance of protein synthesis and viability during nitrogen starvation. In Emericella nidulans (strain FGSC A4 / ATCC 38163 / CBS 112.46 / NRRL 194 / M139) (Aspergillus nidulans), this protein is Autophagy-related protein 22-2 (atg22-2).